We begin with the raw amino-acid sequence, 388 residues long: GTPase Obg (388 aa).

Residues 1–159 (MKFVDEAVIR…RSLKLELLLL (159 aa)) enclose the Obg domain. Residues 160-333 (ADVGLLGMPN…LALKLLDYIA (174 aa)) enclose the OBG-type G domain. GTP contacts are provided by residues 166 to 173 (GMPNAGKS), 191 to 195 (FTTLV), 213 to 216 (DIPG), 283 to 286 (NKTD), and 314 to 316 (SAY). Residues S173 and T193 each contribute to the Mg(2+) site.

This sequence belongs to the TRAFAC class OBG-HflX-like GTPase superfamily. OBG GTPase family. As to quaternary structure, monomer. Requires Mg(2+) as cofactor.

It is found in the cytoplasm. Functionally, an essential GTPase which binds GTP, GDP and possibly (p)ppGpp with moderate affinity, with high nucleotide exchange rates and a fairly low GTP hydrolysis rate. Plays a role in control of the cell cycle, stress response, ribosome biogenesis and in those bacteria that undergo differentiation, in morphogenesis control. The chain is GTPase Obg from Shewanella putrefaciens (strain CN-32 / ATCC BAA-453).